A 103-amino-acid polypeptide reads, in one-letter code: Histone H4 (103 aa).

The disordered stretch occupies residues 1 to 32 (MNTQSIGAKGKSKAAKGIAKRHRKQSSLSDSI). Residues 10-25 (GKSKAAKGIAKRHRKQ) are compositionally biased toward basic residues. At K16 the chain carries N6-acetyl-N6-methyllysine; alternate. Residue K16 is modified to N6-methyllysine; alternate. A DNA-binding region spans residues 20–24 (KRHRK). Residue K94 is modified to N6-glutaryllysine.

Belongs to the histone H4 family. The nucleosome is a histone octamer containing two molecules each of H2A, H2B, H3 and H4 assembled in one H3-H4 heterotetramer and two H2A-H2B heterodimers. The octamer wraps approximately 147 bp of DNA. Post-translationally, glutarylation at Lys-94 (H4K91glu) destabilizes nucleosomes by promoting dissociation of the H2A-H2B dimers from nucleosomes.

It localises to the nucleus. It is found in the chromosome. In terms of biological role, core component of nucleosome. Nucleosomes wrap and compact DNA into chromatin, limiting DNA accessibility to the cellular machineries which require DNA as a template. Histones thereby play a central role in transcription regulation, DNA repair, DNA replication and chromosomal stability. DNA accessibility is regulated via a complex set of post-translational modifications of histones, also called histone code, and nucleosome remodeling. The protein is Histone H4 (HHF1) of Encephalitozoon cuniculi (strain GB-M1) (Microsporidian parasite).